We begin with the raw amino-acid sequence, 354 residues long: Coiled-coil domain-containing protein 86 (354 aa).

Residues methionine 1–valine 354 are disordered. Phosphoserine is present on residues serine 18 and serine 24. Basic and acidic residues predominate over residues valine 31–glutamate 44. A phosphoserine mark is found at serine 47 and serine 53. Positions proline 49 to proline 58 are enriched in low complexity. Threonine 60 is modified (phosphothreonine). 8 positions are modified to phosphoserine: serine 61, serine 64, serine 75, serine 86, serine 105, serine 108, serine 123, and serine 183. Residues phenylalanine 97 to glutamate 107 show a composition bias toward polar residues. Basic and acidic residues predominate over residues proline 199–glycine 211. Phosphoserine occurs at positions 212 and 213. Residues glycine 232 to phenylalanine 248 show a composition bias toward basic residues. 2 stretches are compositionally biased toward basic and acidic residues: residues aspartate 267–arginine 289 and alanine 297–glutamate 311. Positions alanine 274 to arginine 317 form a coiled coil. The span at alanine 320–leucine 330 shows a compositional bias: basic residues. At arginine 336 the chain carries Citrulline.

Post-translationally, citrullinated by PADI4.

It is found in the nucleus. It localises to the chromosome. The protein localises to the nucleolus. Required for proper chromosome segregation during mitosis and error-free mitotic progression. The chain is Coiled-coil domain-containing protein 86 from Bos taurus (Bovine).